Reading from the N-terminus, the 2238-residue chain is MKKMMRHQVKLGILELREIMREIHNYYYLLLLDSWTKLNSVGSLIHLFFHQERFLKLFDPRIFSILLSRNLQGSPSNRYFTIKGVILFVVGVLIYRINNQNMVERKNLYLTGLFPIPMNSTGPIKDRLEEAIGSSNINRLSVLLLYFPKGKNISERYFLNPKETAGVLTITKKGSVPESNWGSRRWRNFIGVKRGNFSCPIANETVGGIDILFKDKFRKNMEFTFVYYMDDLTHNDPDWEFFYRLSTRKSENRINWNSGPLFKILVKDCISYLMSAFREKRPKGEGPESTIQSNKIRHVFHLFSIKRGTISLQNCTHFYMWQFRRDLFRSWGNNPPESSFLRNVSREISSNAWLGNKGRFFSKGRNVLSNLQYDSTGSSLVNVTDSSQLKGSEDQSIERLASIRNEDSEYHALINKREVQQLEESSMTLESDRLPKSLSGYCSTSQLFKERENPMINFMFPGEMEEFIGNPTRSVRSFCSDRWSELHLWSNPTEKSTLDHKFVKNHLSFVRGAENKEIKNLRRIITYLQKTVSIHSISSDPRWDRVPKHDPDMDSFKKNSLFFLFHRFHERNRGAYPLRHDFESEERLQEMTELFTLLISEPDLVYHKGFSFYIYIDSYGLDKKNLLNEVLNARAESKNKSLWVLSPILFRYEEIEYFFKRIRQKRVWWISCGNGLVDLKQNDDGYIRNLFNILFLMNKSDRNFEHRMQGDRKGTAIFNQRTIMKCMIKQDHTYIYKRSNGTKNFQEHLEHFLSQQKSDFKVQKRYFQVLFDQLRICLTKNLIHWFEVRKKVEKKVEKNVYKLVTFLLSKSLRFFFLPQSLHFFFIKVLRFVTEVILFLSNSFPSLCVSFGNTPIQRSEIYISELKSSNEQLCNKLFESIGFQIVHLKKLNPFLLEEFDTSNFVINVGTRSPFLLNKIPKRIFDSLPTRTNHSKYFDNKDSYFSKIFHDKDNWLNHPKPFHRSSLISSFYKANQLRFRNHLHHFLFYCNKRFPFSVEKARNTNSHFLYGQFLNILLFRKKIFSLCVGQKKHVFWSRATLSPIESQVSNIFIPKDFPQSGDEGYNLDKYFNFLIQPDPVIRRAISSIVETSGTPLTEAQKGDLERTYCKPLSDINLSDSEVNNFHEYPNFNSNMGLVHILFSGKYLSSEKHSLCLKKGAGVHKERMFTTFQRDSSFSILSETWNLFQTYLPSFFTSTGYKYLTSIFSENFSYLLSILSSRVSLFQDILGLSWRILQIRLSKMPLFLRREISSKWLHNLFLSKEMIRRKTQSSLISKHLRSTKFWEFFYSLLFLLLVAGYLVSIHFFFISRAFSELQTEFKSLKSLMTPSSAIELRKLLDKYPRSEPNSFWLKNIFLVVMEQLRDSLEEIKGFVFGLNRIGLTSGVKSIRFKNFKNKDFNIKGIGIIELILRPITRIAFSLNTRHISHTSKEIYSLIIKRKNVNGVWIDDKIESWVANSDSIHEEERKLLVQLSALTTEKRILLSLTHSDHFSKNDSGYQMIEQPGAIYLRYLVDIHQKHLMNYEFNTSCLAERRIFLAHSQTITYSQTSYGTNSFHFPSHGKPFSLRLALSPSRGILVIGSIGTGRSYLVKYLATNSYVPFITVFPNKFLDKNPQFIDDIDIDNSNNIDASDDIDMDNSDNIDDDIDRDLATELELLTWMNALTMDREMKAEIARLFITLQFELARAMSPCIIWIPNIHDLDVNESNYLSLGLLVNHLSRDCERCSPINILVIASTHIPQKVDPALIAPKKLNTCIKLRRLLIPQQRKYFFTLSYTRGFHLENKMFHTNGFGSITMGPNARDIVALTNEVLSISITQKKSIIDTNTIRSALHRQTWDLQSQVRLVQDHGILFYQIGRAVAQNVLLSNLSNCPIDPISIYLKKKSCNEGDSYLYKWYFELGTSMKKLTILLYLLSCTAGSVAQDLWSLPGPDEKNGITSYGLVENDSDLVHGLLEVEGALVGSSRTEKNCSKFENDRVTLLLRPEPRNPLERRQNGSCSILDQRFLSEKDESEFEEGALAPQQIEEDLFNHIVWAPTIWRPWGFLCIERPNELGFSYWSRSFRGKRILYDEEDELEENDSEFLQSGTMQYKTRDRSSKEKGLFRISQFIWDPADPLFFLFKDRPPGSVFSRLELFADEEMSKGLLTSQTSQIEHLFRYKYPRWFINKTQEKHFEFLIHRQRCLRTNSSLSNRSFRSNTLSESYQYLSNLFLSNGTLLDQMTKTLLRKRWLFPDEMKIGFM.

G1579–S1586 contributes to the ATP binding site.

The protein belongs to the Ycf2 family.

It localises to the plastid. In terms of biological role, probable ATPase of unknown function. Its presence in a non-photosynthetic plant (Epifagus virginiana) and experiments in tobacco indicate that it has an essential function which is probably not related to photosynthesis. The polypeptide is Protein Ycf2 (Cuscuta exaltata (Tall dodder)).